The sequence spans 457 residues: Glutamate--tRNA ligase 1 (457 aa).

The short motif at 9-19 (PSPTGYIHIGN) is the 'HIGH' region element. Residues 250-254 (GLSKR) carry the 'KMSKS' region motif. K253 contributes to the ATP binding site.

This sequence belongs to the class-I aminoacyl-tRNA synthetase family. Glutamate--tRNA ligase type 1 subfamily. In terms of assembly, monomer.

The protein localises to the cytoplasm. It catalyses the reaction tRNA(Glu) + L-glutamate + ATP = L-glutamyl-tRNA(Glu) + AMP + diphosphate. Its function is as follows. Catalyzes the attachment of glutamate to tRNA(Glu) in a two-step reaction: glutamate is first activated by ATP to form Glu-AMP and then transferred to the acceptor end of tRNA(Glu). This is Glutamate--tRNA ligase 1 from Brucella canis (strain ATCC 23365 / NCTC 10854 / RM-666).